A 369-amino-acid polypeptide reads, in one-letter code: Phospho-N-acetylmuramoyl-pentapeptide-transferase (369 aa).

A run of 10 helical transmembrane segments spans residues 3-23 (ALLFAGAFSLAFTLFLTPLFI), 53-73 (GGIVIILASVLGYFVGHLLTW), 81-101 (VTPSGLLVVFMMVGLGFVGFL), 118-138 (WQKIAGQVVVATVFAVLAITL), 162-182 (FMALGAVIGTGLFIVWICLIV), 198-218 (LAAGASIFSIGSYVIIGFWQF), 240-260 (PLDLAIIAASIVGALIGFLWW), 267-287 (IFMGDTGSLGLGGALAALAIL), 290-310 (TELLLVFIGGLFVIVAGSVVL), and 347-367 (FWIIAGLLVAAGVGTFYLEWI).

The protein belongs to the glycosyltransferase 4 family. MraY subfamily. Mg(2+) is required as a cofactor.

Its subcellular location is the cell membrane. The enzyme catalyses UDP-N-acetyl-alpha-D-muramoyl-L-alanyl-gamma-D-glutamyl-meso-2,6-diaminopimeloyl-D-alanyl-D-alanine + di-trans,octa-cis-undecaprenyl phosphate = di-trans,octa-cis-undecaprenyl diphospho-N-acetyl-alpha-D-muramoyl-L-alanyl-D-glutamyl-meso-2,6-diaminopimeloyl-D-alanyl-D-alanine + UMP. Its pathway is cell wall biogenesis; peptidoglycan biosynthesis. Catalyzes the initial step of the lipid cycle reactions in the biosynthesis of the cell wall peptidoglycan: transfers peptidoglycan precursor phospho-MurNAc-pentapeptide from UDP-MurNAc-pentapeptide onto the lipid carrier undecaprenyl phosphate, yielding undecaprenyl-pyrophosphoryl-MurNAc-pentapeptide, known as lipid I. This chain is Phospho-N-acetylmuramoyl-pentapeptide-transferase, found in Clavibacter michiganensis subsp. michiganensis (strain NCPPB 382).